Reading from the N-terminus, the 292-residue chain is Putative ribonuclease 3 (292 aa).

The 127-residue stretch at 32–158 (LGMSDEYIPY…FFGATEWLID (127 aa)) folds into the RNase III domain. One can recognise a DRBM domain in the interval 204–276 (DAKTRFNEVI…ASRALETLAL (73 aa)).

The protein belongs to the IIV-6 142R family.

It carries out the reaction Endonucleolytic cleavage to 5'-phosphomonoester.. Digests double-stranded RNA. The polypeptide is Putative ribonuclease 3 (Acheta domesticus (House cricket)).